Here is a 412-residue protein sequence, read N- to C-terminus: Serine hydroxymethyltransferase (412 aa).

(6S)-5,6,7,8-tetrahydrofolate is bound by residues Leu120 and 124-126 (GHL). At Lys228 the chain carries N6-(pyridoxal phosphate)lysine. Residue 353–355 (SPF) participates in (6S)-5,6,7,8-tetrahydrofolate binding.

Belongs to the SHMT family. As to quaternary structure, homodimer. Requires pyridoxal 5'-phosphate as cofactor.

The protein localises to the cytoplasm. It catalyses the reaction (6R)-5,10-methylene-5,6,7,8-tetrahydrofolate + glycine + H2O = (6S)-5,6,7,8-tetrahydrofolate + L-serine. It participates in one-carbon metabolism; tetrahydrofolate interconversion. It functions in the pathway amino-acid biosynthesis; glycine biosynthesis; glycine from L-serine: step 1/1. Its function is as follows. Catalyzes the reversible interconversion of serine and glycine with tetrahydrofolate (THF) serving as the one-carbon carrier. This reaction serves as the major source of one-carbon groups required for the biosynthesis of purines, thymidylate, methionine, and other important biomolecules. Also exhibits THF-independent aldolase activity toward beta-hydroxyamino acids, producing glycine and aldehydes, via a retro-aldol mechanism. The sequence is that of Serine hydroxymethyltransferase from Lachnoclostridium phytofermentans (strain ATCC 700394 / DSM 18823 / ISDg) (Clostridium phytofermentans).